The chain runs to 142 residues: Nucleoside diphosphate kinase (142 aa).

ATP-binding residues include Lys-11, Phe-59, Arg-87, Thr-93, Arg-104, and Asn-114. Residue His-117 is the Pros-phosphohistidine intermediate of the active site.

Belongs to the NDK family. As to quaternary structure, homotetramer. Mg(2+) serves as cofactor.

The protein localises to the cytoplasm. It catalyses the reaction a 2'-deoxyribonucleoside 5'-diphosphate + ATP = a 2'-deoxyribonucleoside 5'-triphosphate + ADP. It carries out the reaction a ribonucleoside 5'-diphosphate + ATP = a ribonucleoside 5'-triphosphate + ADP. In terms of biological role, major role in the synthesis of nucleoside triphosphates other than ATP. The ATP gamma phosphate is transferred to the NDP beta phosphate via a ping-pong mechanism, using a phosphorylated active-site intermediate. The polypeptide is Nucleoside diphosphate kinase (Thiobacillus denitrificans (strain ATCC 25259 / T1)).